Reading from the N-terminus, the 192-residue chain is dTTP/UTP pyrophosphatase (192 aa).

Catalysis depends on D68, which acts as the Proton acceptor.

This sequence belongs to the Maf family. YhdE subfamily. It depends on a divalent metal cation as a cofactor.

It localises to the cytoplasm. It catalyses the reaction dTTP + H2O = dTMP + diphosphate + H(+). The enzyme catalyses UTP + H2O = UMP + diphosphate + H(+). Its function is as follows. Nucleoside triphosphate pyrophosphatase that hydrolyzes dTTP and UTP. May have a dual role in cell division arrest and in preventing the incorporation of modified nucleotides into cellular nucleic acids. The sequence is that of dTTP/UTP pyrophosphatase from Cereibacter sphaeroides (strain ATCC 17023 / DSM 158 / JCM 6121 / CCUG 31486 / LMG 2827 / NBRC 12203 / NCIMB 8253 / ATH 2.4.1.) (Rhodobacter sphaeroides).